We begin with the raw amino-acid sequence, 146 residues long: Dihydroneopterin aldolase 1 (146 aa).

Residues E41, Y73, and L92 to E93 contribute to the substrate site. Catalysis depends on K119, which acts as the Proton donor/acceptor.

This sequence belongs to the DHNA family. Homooctamer. Forms a hollow cylinder assembled from two ring-shaped tetramers. Expressed in roots, leaves, stems and siliques.

It catalyses the reaction 7,8-dihydroneopterin = 6-hydroxymethyl-7,8-dihydropterin + glycolaldehyde. It functions in the pathway cofactor biosynthesis; tetrahydrofolate biosynthesis; 2-amino-4-hydroxy-6-hydroxymethyl-7,8-dihydropteridine diphosphate from 7,8-dihydroneopterin triphosphate: step 3/4. Catalyzes the conversion of 7,8-dihydroneopterin into 6-hydroxymethyl-7,8-dihydropterin, a biosynthetic precursor of the vitamin tetrahydrofolate. Can use L-threo-dihydroneopterin and D-erythro-dihydroneopterin as substrates for the formation of 6-hydroxymethyldihydropterin, but it can also catalyze the epimerization of carbon 2' of dihydroneopterin and dihydromonapterin. The sequence is that of Dihydroneopterin aldolase 1 from Arabidopsis thaliana (Mouse-ear cress).